The sequence spans 218 residues: Small ribosomal subunit protein uS3c (218 aa).

The region spanning 47–118 (VQKNLKISSG…KLNITITRIA (72 aa)) is the KH type-2 domain.

Belongs to the universal ribosomal protein uS3 family. As to quaternary structure, part of the 30S ribosomal subunit.

It is found in the plastid. It localises to the chloroplast. The polypeptide is Small ribosomal subunit protein uS3c (rps3) (Daucus carota (Wild carrot)).